Consider the following 85-residue polypeptide: Toxin To9 (85 aa).

Residues 1-19 (MNYSTLIAVASLLTAGTES) form the signal peptide. In terms of domain architecture, LCN-type CS-alpha/beta spans 21–81 (KDGYPVKEGD…AAIKGYGRCR (61 aa)). Cystine bridges form between cysteine 31-cysteine 80, cysteine 35-cysteine 56, cysteine 42-cysteine 63, and cysteine 46-cysteine 65. The residue at position 82 (proline 82) is a Proline amide.

It belongs to the long (4 C-C) scorpion toxin superfamily. Sodium channel inhibitor family. Alpha subfamily. In terms of tissue distribution, expressed by the venom gland.

Its subcellular location is the secreted. Alpha toxins bind voltage-independently at site-3 of sodium channels (Nav) and inhibit the inactivation of the activated channels, thereby blocking neuronal transmission. This is Toxin To9 from Tityus obscurus (Amazonian scorpion).